We begin with the raw amino-acid sequence, 336 residues long: Urokinase plasminogen activator surface receptor (336 aa).

The N-terminal stretch at 1 to 23 (MGHPLLLPLLLLLLHTGVPASWG) is a signal peptide. 3 consecutive UPAR/Ly6 domains span residues 24-111 (LRCM…VTFP), 116-208 (LECI…LSLA), and 215-302 (HRCY…EDIQ). 3 cysteine pairs are disulfide-bonded: Cys26–Cys47, Cys29–Cys35, and Cys40–Cys68. Asn75 carries an N-linked (GlcNAc...) asparagine glycan. 11 disulfide bridges follow: Cys94–Cys99, Cys118–Cys145, Cys121–Cys128, Cys138–Cys170, Cys176–Cys193, Cys194–Cys199, Cys217–Cys245, Cys220–Cys228, Cys238–Cys264, Cys270–Cys288, and Cys289–Cys294. 2 N-linked (GlcNAc...) asparagine glycosylation sites follow: Asn195 and Asn223.

Monomer. Interacts (via the UPAR/Ly6 domains) with SRPX2. Interacts with MRC2. Interacts with FAP (seprase); the interaction occurs at the cell surface of invadopodia membrane. Interacts with SORL1 (via N-terminal ectodomain); this interaction decreases PLAUR internalization. The ternary complex composed of PLAUR-PLAU-SERPINE1 also interacts with SORL1.

It is found in the cell membrane. It localises to the cell projection. Its subcellular location is the invadopodium membrane. Acts as a receptor for urokinase plasminogen activator. Plays a role in localizing and promoting plasmin formation. Mediates the proteolysis-independent signal transduction activation effects of U-PA. It is subject to negative-feedback regulation by U-PA which cleaves it into an inactive form. This is Urokinase plasminogen activator surface receptor (PLAUR) from Aotus trivirgatus (Three-striped night monkey).